We begin with the raw amino-acid sequence, 494 residues long: DnaJ homolog subfamily C member 7 (494 aa).

At A2 the chain carries N-acetylalanine. 8 TPR repeats span residues 28–61 (AESFKEQGNAYYAKKDYNEAYNYYTKAIDMCPNN), 62–95 (ASYYGNRAATLMMLGRFREALGDAQQSVRLDDSF), 96–129 (VRGHLREGKCHLSLGNAMAACRSFQRALELDHKN), 142–175 (VMEYEKIAEVDFEKRDFRKVVFCMDRALEFAPAC), 210–243 (ADALYVRGLCLYYEDCIEKAVQFFVQALRMAPDH), 256–289 (LKAKKEDGNKAFKEGNYKLAYELYTEALGIDPNN), 294–327 (AKLYCNRGTVNSKLRQLEDAIEDCTNAVKLDDTY), and 328–361 (IKAYLRRAQCYMDTEQFEEAVRDYEKVYQTEKTK). In terms of domain architecture, J spans 381 to 451 (DYYKILGVDK…KKKTRYDSGQ (71 aa)). Phosphoserine is present on S393.

As to quaternary structure, associates with complexes containing chaperones HSP70 and HSP90. Interacts with the GAP domain of NF1. Interacts with HSP90AA1. Interacts with HSPA1A/B; the interaction is enhanced by ATP. Interacts with HSP90AB1. Interacts with PGR. Interacts with RAD9A; the interaction is interrupted by UV and heat shock treatments. Interacts with HUS1 and RAD1. Interacts with NR1I3; this complex may also include HSP90 Interacts with HSPA8. In terms of tissue distribution, widely expressed with high levels in liver, skeletal muscle, kidney and testis.

It localises to the cytoplasm. Its subcellular location is the nucleus. It is found in the cytoskeleton. In terms of biological role, acts as a co-chaperone regulating the molecular chaperones HSP70 and HSP90 in folding of steroid receptors, such as the glucocorticoid receptor and the progesterone receptor. Proposed to act as a recycling chaperone by facilitating the return of chaperone substrates to early stages of chaperoning if further folding is required. In vitro, induces ATP-independent dissociation of HSP90 but not of HSP70 from the chaperone-substrate complexes. Recruits NR1I3 to the cytoplasm. In Mus musculus (Mouse), this protein is DnaJ homolog subfamily C member 7 (Dnajc7).